The chain runs to 248 residues: PF03932 family protein CutC (248 aa).

The protein belongs to the CutC family.

The protein localises to the cytoplasm. The sequence is that of PF03932 family protein CutC from Porphyromonas gingivalis (strain ATCC BAA-308 / W83).